Reading from the N-terminus, the 308-residue chain is Acetyl-coenzyme A carboxylase carboxyl transferase subunit beta (308 aa).

The region spanning 25 to 294 (VWTKCTSCEQ…PLVVSVNDSP (270 aa)) is the CoA carboxyltransferase N-terminal domain. Zn(2+)-binding residues include C29, C32, C48, and C51. The segment at 29 to 51 (CTSCEQVLYHAELERNLEVCPKC) adopts a C4-type zinc-finger fold.

It belongs to the AccD/PCCB family. Acetyl-CoA carboxylase is a heterohexamer composed of biotin carboxyl carrier protein (AccB), biotin carboxylase (AccC) and two subunits each of ACCase subunit alpha (AccA) and ACCase subunit beta (AccD). The cofactor is Zn(2+).

The protein localises to the cytoplasm. It catalyses the reaction N(6)-carboxybiotinyl-L-lysyl-[protein] + acetyl-CoA = N(6)-biotinyl-L-lysyl-[protein] + malonyl-CoA. It participates in lipid metabolism; malonyl-CoA biosynthesis; malonyl-CoA from acetyl-CoA: step 1/1. Component of the acetyl coenzyme A carboxylase (ACC) complex. Biotin carboxylase (BC) catalyzes the carboxylation of biotin on its carrier protein (BCCP) and then the CO(2) group is transferred by the transcarboxylase to acetyl-CoA to form malonyl-CoA. The polypeptide is Acetyl-coenzyme A carboxylase carboxyl transferase subunit beta (Vibrio vulnificus (strain CMCP6)).